An 81-amino-acid chain; its full sequence is Small ribosomal subunit protein bS16 (81 aa).

Belongs to the bacterial ribosomal protein bS16 family.

In Colwellia psychrerythraea (strain 34H / ATCC BAA-681) (Vibrio psychroerythus), this protein is Small ribosomal subunit protein bS16.